Reading from the N-terminus, the 476-residue chain is Protein transport protein Sec61 subunit alpha isoform B (476 aa).

The Cytoplasmic portion of the chain corresponds to 2–33 (GIKFLEVIKPFCAVLPEIQKPERKIQFREKVL). A helical transmembrane segment spans residues 34–53 (WTAITLFIFLVCCQIPLFGI). Residues 54-76 (MSSDSADPFYWMRVILASNRGTL) lie on the Lumenal side of the membrane. A helical membrane pass occupies residues 77 to 96 (MELGISPIVTSGLIMQLLAG). Topologically, residues 97-117 (AKIIEVGDTPKDRALFNGAQK) are cytoplasmic. The chain crosses the membrane as a helical span at residues 118–138 (LFGMIITIGQAIVYVMTGMYG). At 139 to 144 (DPSDMG) the chain is on the lumenal side. Residues 145 to 165 (AGICLLIIIQLFVAGLIVLLL) form a helical membrane-spanning segment. Over 166–172 (DELLQKG) the chain is Cytoplasmic. Residues 173-193 (YGLGSGISLFIATNICETIVW) traverse the membrane as a helical segment. The Lumenal portion of the chain corresponds to 194-240 (KAFSPTTVNTGRGTEFEGAIIALFHLLATRTDKVRALREAFYRQNLP). The chain crosses the membrane as a helical span at residues 241 to 261 (NLMNLLATVFVFGVVIYFQGF). Topologically, residues 262–288 (RVDLPIKSARYRGQYNTYPIKLFYTSN) are cytoplasmic. A helical transmembrane segment spans residues 289-309 (IPIILQSALVSNLYVISQMLS). The Lumenal portion of the chain corresponds to 310 to 354 (TRFSGNFLVNLLGTWSDTSSGGPARAYPVGGLCYYFSPPESFGSV). A helical transmembrane segment spans residues 355 to 375 (LDDPIHAAIYICFMLGSCAFF). Topologically, residues 376 to 420 (SKTWIEVSGSSAKDVAKQLKEQQMVMRGHRETSMVHELNRYIPTA) are cytoplasmic. The chain crosses the membrane as a helical span at residues 421–441 (AAFGGLCIGGLSVMADFLGAI). At 442–445 (GSGT) the chain is on the lumenal side. A helical transmembrane segment spans residues 446 to 462 (GILLAVTIIYQYFEIFV). Topologically, residues 463–476 (KEQSEMGSMGALLF) are cytoplasmic.

The protein belongs to the SecY/SEC61-alpha family. As to quaternary structure, the SEC61 channel-forming translocon complex consists of channel-forming core components SEC61A1, SEC61B and SEC61G and different auxiliary components such as SEC62 and SEC63.

The protein resides in the endoplasmic reticulum membrane. Its function is as follows. Component of SEC61 channel-forming translocon complex that mediates transport of signal peptide-containing precursor polypeptides across the endoplasmic reticulum (ER). Forms a ribosome receptor and a gated pore in the ER membrane, both functions required for cotranslational translocation of nascent polypeptides. In Oncorhynchus mykiss (Rainbow trout), this protein is Protein transport protein Sec61 subunit alpha isoform B (sec61ab).